The primary structure comprises 238 residues: Ribitol-5-phosphate cytidylyltransferase (238 aa).

CTP contacts are provided by residues 7 to 10 (LAGG) and 81 to 87 (GSDRNET).

Belongs to the IspD/TarI cytidylyltransferase family. TarI subfamily.

The enzyme catalyses D-ribitol 5-phosphate + CTP + H(+) = CDP-L-ribitol + diphosphate. The protein operates within cell wall biogenesis; poly(ribitol phosphate) teichoic acid biosynthesis. In terms of biological role, catalyzes the transfer of the cytidylyl group of CTP to D-ribitol 5-phosphate. This is Ribitol-5-phosphate cytidylyltransferase from Staphylococcus saprophyticus subsp. saprophyticus (strain ATCC 15305 / DSM 20229 / NCIMB 8711 / NCTC 7292 / S-41).